Consider the following 325-residue polypeptide: MSDTASWQPSAPIANLLKRAAIMAEIRRFFADRGVLEVETPTMSQATVTDIHLVPFETRFVGPGAADGLTLYMMTSPEYHMKRLLAAGSGPIYQLGRSFRNEEAGRYHNPEFTMLEWYRPHYDMYRLMNEVDDLLQQILDCNSAETLSYQQAFLRHLNIDPLSAEKAQLREVAAKLDLSNIADTEEDRDTLLQLLFTVGVEPYIGRDKPAFIYHFPASQASLAEISTEDHRVAERFEVYFKGIELANGFRELTDGDEQLQRFEQDNRNRAKRGLPQNPIDMNLIAALKQGLPDCSGVALGVDRLVMLALNAERLSDVIAFPVNIA.

A substrate-binding site is contributed by 76-78 (SPE). ATP-binding positions include 100–102 (RNE) and asparagine 109. A substrate-binding site is contributed by tyrosine 118. 244–245 (EL) provides a ligand contact to ATP. Glutamate 251 serves as a coordination point for substrate. Glycine 300 is an ATP binding site.

Belongs to the class-II aminoacyl-tRNA synthetase family. EpmA subfamily. As to quaternary structure, homodimer.

It catalyses the reaction D-beta-lysine + L-lysyl-[protein] + ATP = N(6)-((3R)-3,6-diaminohexanoyl)-L-lysyl-[protein] + AMP + diphosphate + H(+). With EpmB is involved in the beta-lysylation step of the post-translational modification of translation elongation factor P (EF-P). Catalyzes the ATP-dependent activation of (R)-beta-lysine produced by EpmB, forming a lysyl-adenylate, from which the beta-lysyl moiety is then transferred to the epsilon-amino group of a conserved specific lysine residue in EF-P. In Yersinia pseudotuberculosis serotype O:1b (strain IP 31758), this protein is Elongation factor P--(R)-beta-lysine ligase.